Consider the following 133-residue polypeptide: Profilin Sal k 4.0301 (133 aa).

A disulfide bond links cysteine 95 and cysteine 117.

The protein belongs to the profilin family. As to quaternary structure, occurs in many kinds of cells as a complex with monomeric actin in a 1:1 ratio. Expressed in pollen (at protein and mRNA level).

The protein resides in the cytoplasm. It is found in the cytoskeleton. Its function is as follows. Binds to actin and affects the structure of the cytoskeleton. At high concentrations, profilin prevents the polymerization of actin, whereas it enhances it at low concentrations. The chain is Profilin Sal k 4.0301 from Kali turgidum (Prickly saltwort).